A 336-amino-acid chain; its full sequence is Sulfate/thiosulfate import ATP-binding protein CysA (336 aa).

The 231-residue stretch at 3-233 (ITIENVSKSF…PASPFVMSFI (231 aa)) folds into the ABC transporter domain. 35-42 (GPSGSGKS) contributes to the ATP binding site.

This sequence belongs to the ABC transporter superfamily. Sulfate/tungstate importer (TC 3.A.1.6) family. In terms of assembly, the complex is composed of two ATP-binding proteins (CysA), two transmembrane proteins (CysT and CysW) and a solute-binding protein (CysP).

Its subcellular location is the cell inner membrane. The enzyme catalyses sulfate(out) + ATP + H2O = sulfate(in) + ADP + phosphate + H(+). It carries out the reaction thiosulfate(out) + ATP + H2O = thiosulfate(in) + ADP + phosphate + H(+). In terms of biological role, part of the ABC transporter complex CysAWTP involved in sulfate/thiosulfate import. Responsible for energy coupling to the transport system. In Thermosynechococcus vestitus (strain NIES-2133 / IAM M-273 / BP-1), this protein is Sulfate/thiosulfate import ATP-binding protein CysA.